A 149-amino-acid polypeptide reads, in one-letter code: Lipoprotein MlpF (149 aa).

Positions 1–17 (MKIINILFCLFLLLLNS) are cleaved as a signal peptide. A lipid anchor (N-palmitoyl cysteine) is attached at Cys18. Cys18 carries S-diacylglycerol cysteine lipidation. The disordered stretch occupies residues 26-58 (LKNNAQQTKSRGKRDLTQKEATPEKPKSKEELL). Residues 38–58 (KRDLTQKEATPEKPKSKEELL) are compositionally biased toward basic and acidic residues.

Belongs to the Multicopy lipoprotein (Mlp) family.

The protein resides in the cell outer membrane. Functionally, an outer membrane protein that may participate in pathogenesis. Some human Lyme disease patients have antibodies against this protein. The Mlp proteins probably undergo intragenic recombination, generating new alleles. This Borreliella burgdorferi (strain ATCC 35210 / DSM 4680 / CIP 102532 / B31) (Borrelia burgdorferi) protein is Lipoprotein MlpF.